The sequence spans 417 residues: C4-dicarboxylate transport protein (417 aa).

8 consecutive transmembrane segments (helical) span residues 4 to 26 (IYVQVLIAIVLGVLVGAIWPQIG), 41 to 60 (KLVIAPVIFCTVAGGIARMG), 72 to 94 (ALIYFEVVSTLALVIGLVVGRLI), 137 to 159 (FIGAFADGNLLQVLVIAILTGFA), 180 to 202 (LFFGIIHIVVRLAPIGAFGAMGF), 217 to 239 (ALVATFYVTSLLFVLVVLGGIAW), 285 to 307 (VVGLVIPTGYSFNLDGTNIYMTL), and 347 to 369 (FITLAATLAVVPDIPIAALAILV).

It belongs to the dicarboxylate/amino acid:cation symporter (DAACS) (TC 2.A.23) family.

It is found in the cell inner membrane. In terms of biological role, responsible for the transport of dicarboxylates such as succinate, fumarate, and malate from the periplasm across the membrane. The polypeptide is C4-dicarboxylate transport protein (Caulobacter vibrioides (strain ATCC 19089 / CIP 103742 / CB 15) (Caulobacter crescentus)).